The sequence spans 299 residues: dTDP-4-dehydrorhamnose reductase (299 aa).

NADH-binding positions include 10 to 12, D30, 39 to 40, and 63 to 65; these read GQV, DF, and AHT. 11–12 is a binding site for NADPH; it reads QV. NADPH is bound by residues 39–40, 63–65, and Y102; these read DF and AHT. 104-105 is a dTDP-beta-L-rhamnose binding site; the sequence is TD. NADH contacts are provided by Y128 and K132. NADPH contacts are provided by Y128 and K132. Catalysis depends on Y128, which acts as the Proton donor/acceptor. Position 153 (W153) interacts with dTDP-beta-L-rhamnose.

The protein belongs to the dTDP-4-dehydrorhamnose reductase family. Homodimer. The cofactor is Mg(2+).

It carries out the reaction dTDP-beta-L-rhamnose + NADP(+) = dTDP-4-dehydro-beta-L-rhamnose + NADPH + H(+). The protein operates within carbohydrate biosynthesis; dTDP-L-rhamnose biosynthesis. It functions in the pathway bacterial outer membrane biogenesis; LPS O-antigen biosynthesis. Involved in the biosynthesis of the dTDP-L-rhamnose which is an important component of lipopolysaccharide (LPS). Catalyzes the reduction of dTDP-6-deoxy-L-lyxo-4-hexulose to yield dTDP-L-rhamnose. RmlD uses NADH and NADPH nearly equally well. This is dTDP-4-dehydrorhamnose reductase from Escherichia coli (strain K12).